A 246-amino-acid chain; its full sequence is uncharacterized protein (246 aa).

The N-terminal stretch at 1–30 is a signal peptide; the sequence is MKKKQVSHAIIISVMLSFVIAVFHTIHASE.

This is an uncharacterized protein from Bacillus subtilis (strain 168).